The following is a 555-amino-acid chain: Sulfite reductase [ferredoxin] 2 (555 aa).

The disordered stretch occupies residues 1–31; sequence MTTARPAKARNEGQWALGNREPLNPNEEMKQ. The segment at residues 69–161 is a cross-link (3'-(S-cysteinyl)-tyrosine (Tyr-Cys)); that stretch reads YTQREQGYDG…AVGLRTTEAC (93 aa). [4Fe-4S] cluster-binding residues include C417, C423, C463, and C467. Residue C467 coordinates siroheme.

Belongs to the nitrite and sulfite reductase 4Fe-4S domain family. Monomer. Requires siroheme as cofactor. [4Fe-4S] cluster serves as cofactor.

The catalysed reaction is hydrogen sulfide + 6 oxidized [2Fe-2S]-[ferredoxin] + 3 H2O = sulfite + 6 reduced [2Fe-2S]-[ferredoxin] + 7 H(+). Its function is as follows. Catalyzes the reduction of sulfite to sulfide, a step in the biosynthesis of sulfur-containing amino acids and cofactors. The sequence is that of Sulfite reductase [ferredoxin] 2 (sir2) from Mycolicibacterium paratuberculosis (strain ATCC BAA-968 / K-10) (Mycobacterium paratuberculosis).